Reading from the N-terminus, the 202-residue chain is 3-isopropylmalate dehydratase small subunit 2 (202 aa).

This sequence belongs to the LeuD family. LeuD type 1 subfamily. In terms of assembly, heterodimer of LeuC and LeuD.

The enzyme catalyses (2R,3S)-3-isopropylmalate = (2S)-2-isopropylmalate. It functions in the pathway amino-acid biosynthesis; L-leucine biosynthesis; L-leucine from 3-methyl-2-oxobutanoate: step 2/4. Catalyzes the isomerization between 2-isopropylmalate and 3-isopropylmalate, via the formation of 2-isopropylmaleate. The protein is 3-isopropylmalate dehydratase small subunit 2 of Bordetella parapertussis (strain 12822 / ATCC BAA-587 / NCTC 13253).